Consider the following 314-residue polypeptide: 3'-5' exoribonuclease YhaM (314 aa).

The HD domain occupies 163–279 (HVVSMLDLAK…LHYIDNLDAK (117 aa)).

It belongs to the YhaM family.

Functionally, shows a 3'-5' exoribonuclease activity. This Bacillus thuringiensis (strain Al Hakam) protein is 3'-5' exoribonuclease YhaM.